Reading from the N-terminus, the 1371-residue chain is DNA-directed RNA polymerase subunit beta'' (1371 aa).

Positions 220, 293, 300, and 303 each coordinate Zn(2+).

It belongs to the RNA polymerase beta' chain family. RpoC2 subfamily. In plastids the minimal PEP RNA polymerase catalytic core is composed of four subunits: alpha, beta, beta', and beta''. When a (nuclear-encoded) sigma factor is associated with the core the holoenzyme is formed, which can initiate transcription. Zn(2+) serves as cofactor.

Its subcellular location is the plastid. It localises to the chloroplast. The catalysed reaction is RNA(n) + a ribonucleoside 5'-triphosphate = RNA(n+1) + diphosphate. Functionally, DNA-dependent RNA polymerase catalyzes the transcription of DNA into RNA using the four ribonucleoside triphosphates as substrates. This chain is DNA-directed RNA polymerase subunit beta'', found in Lobularia maritima (Sweet alyssum).